The sequence spans 72 residues: Mitotic-spindle organizing protein 1 (72 aa).

The protein belongs to the MOZART1 family. In terms of assembly, part of the gamma-tubulin complex.

It is found in the cytoplasm. The protein localises to the cytoskeleton. The protein resides in the microtubule organizing center. Its subcellular location is the centrosome. It localises to the spindle. Its function is as follows. Required for gamma-tubulin complex recruitment to the centrosome. In Xenopus tropicalis (Western clawed frog), this protein is Mitotic-spindle organizing protein 1 (mzt1).